The primary structure comprises 232 residues: MFQFCLLILLLAPGRFFSALGKPQETLTVENREGSDSKAIPTCREASFCAFLQINPIDSNLDVLPTCTCTGGTTCSHSWDPNDGKSITEGHRQFKFCSNVLDTIKHECSAEEKALTGIFEEDKVTKIHLAYYGFLHCICPDHSDYPENSYNETETVEGDKKIITEYYHCEQFKTCKSDDTCHALAIGETKKIYYKDCNCPEGQTCPFELNSAYKTEYKETTDKFTTYSMRCQ.

The first 21 residues, 1 to 21, serve as a signal peptide directing secretion; that stretch reads MFQFCLLILLLAPGRFFSALG.

The protein belongs to the scoloptoxin-11 family. Post-translationally, contains 8 disulfide bonds. In terms of tissue distribution, expressed by the venom gland.

It localises to the secreted. The protein is U-scoloptoxin(11)-Sa3a of Scolopendra alternans (Florida Keys giant centipede).